The following is a 446-amino-acid chain: Packaging protein 1 (446 aa).

Residues 1-71 (MEEKAGLGRL…QPQASKPKKH (71 aa)) form a disordered region. The span at 31 to 43 (FHSDRNHPNKEAE) shows a compositional bias: basic and acidic residues. Residue 170–177 (GPTGCGKS) coordinates ATP. Positions 439–446 (RYYHSKKK) are DNA-binding.

It belongs to the adenoviridae packaging protein 1 family. In terms of assembly, homodimer. Part of a genome packaging complex composed of packaging proteins 1, 2 and 3; this complex specifically binds to the packaging sequence on the left end of viral genomic DNA and performs packaging of the viral genome. Interacts with protein 33K.

The protein localises to the virion. Its subcellular location is the host nucleus. It is found in the host nucleoplasm. The protein resides in the host nucleolus. Component of the packaging machinery which encapsidates the viral DNA into preformed capsids and transcriptional activator of the viral major late promoter (MLP). Binds, along with packaging proteins 2 and 3, to the specific packaging sequence on the left end of viral genomic DNA and displays ATPase activity thereby providing the power stroke of the packaging machinery. The activity of packaging protein IVa2 is stimulated by protein 33K which acts as a terminase. May be the protein that pumps DNA into the capsid powered by ATP hydrolysis. Specifically binds to the 5'-CG-3' nucleotides of the repeats making up the packaging sequence. Component of the DEF-A and DEF-B transcription factors that bind downstream elements of the major late promoter (MLP), and stimulate transcription from the MLP after initiation of viral DNA replication. DEF-A is a heterodimer packaging proteins 1 and 2 and DEF-B is a homodimer of packaging protein 1. This is Packaging protein 1 from Canine adenovirus serotype 2 (strain Toronto A 26-61) (CAdV-2).